The sequence spans 515 residues: MTKRALISVSDKSGIVDFAKELKNLGWDIISTGGTKVALDNAGVETIAIDDVTGFPEMMDGRVKTLHPNIHGGLLARRDADSHLQAAKDNNIELIDLVVVNLYPFKETILRPDITYDLAVENIDIGGPSMLRSAAKNHASVTVVVDPADYATVLGELADAGQTTFETRQRLAAKVFRHTAAYDALIAEYFTTQVGEAKPEKLTITYDLKQAMRYGENPQQDADFYQKALPTDYSIASAKQLNGKELSFNNIRDADAAIRIIRDFKDRPTVVVLKHMNPCGIGQADDIETAWDYAYEADPVSIFGGIVVLNREVDAATAKKMHPIFLEIIIAPSYSEEALAILTNKKKNLRILELPFDAQAASEVEAEYTGVVGGLLVQNQDVVAENPSDWQVVTDRQPTEQEATALEFAWKAIKYVKSNGIIITNDHMTLGLGAGQTNRVGSVKIAIEQAKDHLDGAVLASDAFFPFADNIEEIAAAGIKAIIQPGGSVRDQDSIDAANKHGLTMIFTGVRHFRH.

The MGS-like domain occupies 1–145; it reads MTKRALISVS…KNHASVTVVV (145 aa).

This sequence belongs to the PurH family.

The catalysed reaction is (6R)-10-formyltetrahydrofolate + 5-amino-1-(5-phospho-beta-D-ribosyl)imidazole-4-carboxamide = 5-formamido-1-(5-phospho-D-ribosyl)imidazole-4-carboxamide + (6S)-5,6,7,8-tetrahydrofolate. It catalyses the reaction IMP + H2O = 5-formamido-1-(5-phospho-D-ribosyl)imidazole-4-carboxamide. It participates in purine metabolism; IMP biosynthesis via de novo pathway; 5-formamido-1-(5-phospho-D-ribosyl)imidazole-4-carboxamide from 5-amino-1-(5-phospho-D-ribosyl)imidazole-4-carboxamide (10-formyl THF route): step 1/1. Its pathway is purine metabolism; IMP biosynthesis via de novo pathway; IMP from 5-formamido-1-(5-phospho-D-ribosyl)imidazole-4-carboxamide: step 1/1. The sequence is that of Bifunctional purine biosynthesis protein PurH from Streptococcus pyogenes serotype M12 (strain MGAS2096).